The following is a 113-amino-acid chain: Iron-sulfur cluster insertion protein ErpA (113 aa).

Residues Cys-41, Cys-105, and Cys-107 each coordinate iron-sulfur cluster.

This sequence belongs to the HesB/IscA family. Homodimer. Iron-sulfur cluster is required as a cofactor.

Required for insertion of 4Fe-4S clusters for at least IspG. The polypeptide is Iron-sulfur cluster insertion protein ErpA (Actinobacillus pleuropneumoniae serotype 7 (strain AP76)).